A 255-amino-acid polypeptide reads, in one-letter code: Putative glycyl-radical enzyme activating enzyme MJ1632 (255 aa).

In terms of domain architecture, Radical SAM core spans 30–245; the sequence is SHISLSDKIT…SNVSCSLDFK (216 aa). The [4Fe-4S] cluster site is built by cysteine 45, cysteine 49, and cysteine 52. Residues 51–53, glycine 88, and 134–136 contribute to the S-adenosyl-L-methionine site; these read YCF and DLK.

This sequence belongs to the organic radical-activating enzymes family. The cofactor is [4Fe-4S] cluster.

The catalysed reaction is glycyl-[protein] + reduced [flavodoxin] + S-adenosyl-L-methionine = glycin-2-yl radical-[protein] + semiquinone [flavodoxin] + 5'-deoxyadenosine + L-methionine + H(+). The protein is Putative glycyl-radical enzyme activating enzyme MJ1632 of Methanocaldococcus jannaschii (strain ATCC 43067 / DSM 2661 / JAL-1 / JCM 10045 / NBRC 100440) (Methanococcus jannaschii).